A 215-amino-acid polypeptide reads, in one-letter code: MSEHETAGEGRFNSIEIRVLGSLIEKQATSPESYPLTLNALVLACNQKTSREPVMNLTQGQVGQALRALEGQGMTRLQMGSRADRWEHRVDKALELVPAQLVLMGLMFLRGPQTLNELLTRSNRLHDFDDTEQIQHQLERLISRDLALHLPRQAGQREDRYTHALGDPAEIEAILAARQQEGGARTSGGSVSEDRIEALEARIAALEARLAELEG.

Belongs to the UPF0502 family.

In Pseudomonas putida (strain ATCC 47054 / DSM 6125 / CFBP 8728 / NCIMB 11950 / KT2440), this protein is UPF0502 protein PP_2442.